The sequence spans 603 residues: MASHSSVSYRSVRTGGTSAMIGSSGYGGSSSSRAMGLGMGAAGLSMGGGSFRVGSAGIGGMGISSGIGGMGISSRAGGMSAYGGAASGGAGGFVSGGVPMLGYGGGAGGFIGGVSPGIMASPAFTAGRAITSAGMSGVVGTLGPAGGMVPSLVSRDEVKNILGTLNQRLASYVDKVRQLTIENETMEEELKNLTGGVPMSPDSTVNLENVETQVTEMLTEVSNLTLERVRLEIDVDHLRATADEIKSKYEFELGVRMQLETDIANMKRDLEAANDMRVDLDSKFNFLTEELTFQRKTQMEELNTLKQQFGRLGPVQTSVIELDNVKSVNLTDALNVMREEYQQVVTKNVQEAETYCKMQIDQIQGISTQTTEQISILDKEINTLEKELQPLNVEYQRLLTTYQTLGDRLTDLQNRESIDLVQFQNTYTRYEQEIEGNQVDLQRQLVTYQQLLDVKTALDAEIATYKKLLEGQELMVRTAMADDFAHATVVRSGTLGGASSSSVGYGASSTTLGAISGGYSTGGGASYSAGAGGASYSAGAGGASYGVGGGYSGGSSAMMEGSSSGGHSMYSSSSMKRSSSKSASASAGGYGTSGHDSTIILQQ.

Positions 1–191 (MASHSSVSYR…ENETMEEELK (191 aa)) are head. Positions 158–476 (VKNILGTLNQ…KLLEGQELMV (319 aa)) constitute an IF rod domain. Residues 193–227 (LTGGVPMSPDSTVNLENVETQVTEMLTEVSNLTLE) are coil 1A. The tract at residues 228 to 240 (RVRLEIDVDHLRA) is linker 1. The coil 1B stretch occupies residues 241–341 (TADEIKSKYE…DALNVMREEY (101 aa)). The interval 342–362 (QQVVTKNVQEAETYCKMQIDQ) is linker 12. Positions 363–381 (IQGISTQTTEQISILDKEI) are coil 2A. Positions 382 to 389 (NTLEKELQ) are linker 2. The segment at 390-510 (PLNVEYQRLL…SSVGYGASST (121 aa)) is coil 2B. The tail stretch occupies residues 511–603 (TLGAISGGYS…GHDSTIILQQ (93 aa)). The segment covering 562–587 (SSSGGHSMYSSSSMKRSSSKSASASA) has biased composition (low complexity). The disordered stretch occupies residues 562-603 (SSSGGHSMYSSSSMKRSSSKSASASAGGYGTSGHDSTIILQQ).

It belongs to the intermediate filament family. Coiled-coil heterodimer of an alpha and a gamma subunit. Assemble into 10 nm filaments. Forms a massive, conical, intermediate filament biopolymer of approximately 60 cm.

Its subcellular location is the secreted. The protein localises to the extracellular space. Functionally, released extracellularly into seawater and provides physical and biological defense against invasive organism by modulation of the viscoelastic properties of mucus. In Eptatretus stoutii (Pacific hagfish), this protein is Thread biopolymer filament subunit gamma.